A 416-amino-acid polypeptide reads, in one-letter code: Chaperone protein dnaJ A6 (416 aa).

Positions 12–73 constitute a J domain; sequence KYYEVLGVPK…EKRDIYDQYG (62 aa). The CR-type zinc finger occupies 133-217; it reads GSMKKLSLSR…CRASKVIQEK (85 aa). Residues Cys146, Cys149, Cys162, Cys165, Cys189, Cys192, Cys205, and Cys208 each coordinate Zn(2+). 3 CXXCXGXG motif repeats span residues 146 to 153, 162 to 169, and 189 to 196; these read CPKCKGKG, CYGCHGVG, and CPECRGSG. The segment covering 380–399 has biased composition (basic and acidic residues); that stretch reads HDVNIEEEMRRKQYQRKQEA. Positions 380–416 are disordered; sequence HDVNIEEEMRRKQYQRKQEAYDEDEEEDAPRVQCAQQ.

This sequence belongs to the DnaJ family. As to quaternary structure, interacts with ZFP1.

It is found in the nucleus. Its subcellular location is the cytoplasm. Its function is as follows. Involved in disease resistance. Acts as a negative regulator of innate immunity to the rice blast fungus (Magnaporthe oryzae). Acts as a negative regulator of the pathogen-associated molecular pattern (PAMP)-triggered immunity (PTI) response through the inhibition of reactive oxygen species (ROS) accumulation and expression of defense-related genes. May function via the ubiquitin-proteasome degradation pathway. This Oryza sativa subsp. japonica (Rice) protein is Chaperone protein dnaJ A6.